The chain runs to 331 residues: 4-hydroxythreonine-4-phosphate dehydrogenase (331 aa).

H136 and T137 together coordinate substrate. Residues H166, H211, and H266 each coordinate a divalent metal cation. K274, N283, and R292 together coordinate substrate.

It belongs to the PdxA family. In terms of assembly, homodimer. Zn(2+) is required as a cofactor. It depends on Mg(2+) as a cofactor. Requires Co(2+) as cofactor.

The protein resides in the cytoplasm. It catalyses the reaction 4-(phosphooxy)-L-threonine + NAD(+) = 3-amino-2-oxopropyl phosphate + CO2 + NADH. Its pathway is cofactor biosynthesis; pyridoxine 5'-phosphate biosynthesis; pyridoxine 5'-phosphate from D-erythrose 4-phosphate: step 4/5. Its function is as follows. Catalyzes the NAD(P)-dependent oxidation of 4-(phosphooxy)-L-threonine (HTP) into 2-amino-3-oxo-4-(phosphooxy)butyric acid which spontaneously decarboxylates to form 3-amino-2-oxopropyl phosphate (AHAP). This Thioalkalivibrio sulfidiphilus (strain HL-EbGR7) protein is 4-hydroxythreonine-4-phosphate dehydrogenase.